The primary structure comprises 461 residues: Argininosuccinate lyase (461 aa).

Belongs to the lyase 1 family. Argininosuccinate lyase subfamily.

The protein localises to the cytoplasm. It carries out the reaction 2-(N(omega)-L-arginino)succinate = fumarate + L-arginine. It participates in amino-acid biosynthesis; L-arginine biosynthesis; L-arginine from L-ornithine and carbamoyl phosphate: step 3/3. The polypeptide is Argininosuccinate lyase (Nitrosomonas europaea (strain ATCC 19718 / CIP 103999 / KCTC 2705 / NBRC 14298)).